A 45-amino-acid polypeptide reads, in one-letter code: AFAPSKVDSDRPNCSRYVQHLYMCTKELDPVCGTDGHTYGNRSIF.

A Kazal-like domain is found at 8 to 45; that stretch reads DSDRPNCSRYVQHLYMCTKELDPVCGTDGHTYGNRSIF. Asn13 and Asn41 each carry an N-linked (GlcNAc...) asparagine glycan.

Glycosylated.

The protein localises to the secreted. Functionally, inhibits calcium transport into spermatozoa. This chain is Caltrin-like protein 1, found in Cavia porcellus (Guinea pig).